We begin with the raw amino-acid sequence, 446 residues long: MKRKDDDQEDRSCSSASKLDPIPLDLKMATVPTKSHMKKSHQNKLEEDEKEDTNPSKLELDSLPLDLKMAILTRIPAKSLMKLRCVSKMWSSIIRSRGFIDSYYAISSKQSRFIVGLSNAAFNEPEKQLTFLFSFSHEDGEKSSSSSLVPNFEMAVPCSLAGLSHSLASFHGILAVEGKVMCNPNTEQFTTLPVGTIFVGYDPIDDQYKALGFDFDKRCHGNAIGHKVWTLGGGEGMRQIRGDLAPYRPILLPNVCINGVIYYGAHTLSQTKDPVIVCFDVRSEKLSFITAPAVVLQSGMKSILIDYKGKLASIVRNSCGGCISSFVFWILEDPKKHEWSRQSCDFPYSLWDYVGNVRICFFGTNKAGEIIIAPMFLSRDVRSFYIFYYNVETKTMRRVRLRGIGSDIEFRRSYGSENKLCNCHVRIAHQHVESIAFLKDHINLRT.

2 stretches are compositionally biased toward basic and acidic residues: residues 1 to 12 (MKRKDDDQEDRS) and 43 to 57 (NKLE…NPSK). A disordered region spans residues 1-57 (MKRKDDDQEDRSCSSASKLDPIPLDLKMATVPTKSHMKKSHQNKLEEDEKEDTNPSK). Residues 57 to 107 (KLELDSLPLDLKMAILTRIPAKSLMKLRCVSKMWSSIIRSRGFIDSYYAIS) enclose the F-box domain.

The polypeptide is Putative F-box protein At1g32660 (Arabidopsis thaliana (Mouse-ear cress)).